The following is a 357-amino-acid chain: Histidinol-phosphate aminotransferase 2 (357 aa).

An N6-(pyridoxal phosphate)lysine modification is found at K215.

This sequence belongs to the class-II pyridoxal-phosphate-dependent aminotransferase family. Histidinol-phosphate aminotransferase subfamily. As to quaternary structure, homodimer. Pyridoxal 5'-phosphate serves as cofactor.

It carries out the reaction L-histidinol phosphate + 2-oxoglutarate = 3-(imidazol-4-yl)-2-oxopropyl phosphate + L-glutamate. Its pathway is amino-acid biosynthesis; L-histidine biosynthesis; L-histidine from 5-phospho-alpha-D-ribose 1-diphosphate: step 7/9. This chain is Histidinol-phosphate aminotransferase 2, found in Thiobacillus denitrificans (strain ATCC 25259 / T1).